A 183-amino-acid chain; its full sequence is Porphobilinogen deaminase (183 aa).

The protein belongs to the HMBS family. As to quaternary structure, monomer. Requires dipyrromethane as cofactor.

The enzyme catalyses 4 porphobilinogen + H2O = hydroxymethylbilane + 4 NH4(+). It participates in porphyrin-containing compound metabolism; protoporphyrin-IX biosynthesis; coproporphyrinogen-III from 5-aminolevulinate: step 2/4. Functionally, tetrapolymerization of the monopyrrole PBG into the hydroxymethylbilane pre-uroporphyrinogen in several discrete steps. This chain is Porphobilinogen deaminase (hemC), found in Yersinia intermedia.